The following is a 305-amino-acid chain: Methionyl-tRNA formyltransferase (305 aa).

Residue 111–114 (SLLP) participates in (6S)-5,6,7,8-tetrahydrofolate binding.

It belongs to the Fmt family.

The enzyme catalyses L-methionyl-tRNA(fMet) + (6R)-10-formyltetrahydrofolate = N-formyl-L-methionyl-tRNA(fMet) + (6S)-5,6,7,8-tetrahydrofolate + H(+). Functionally, attaches a formyl group to the free amino group of methionyl-tRNA(fMet). The formyl group appears to play a dual role in the initiator identity of N-formylmethionyl-tRNA by promoting its recognition by IF2 and preventing the misappropriation of this tRNA by the elongation apparatus. In Helicobacter pylori (strain P12), this protein is Methionyl-tRNA formyltransferase.